A 411-amino-acid chain; its full sequence is NAD-dependent dihydropyrimidine dehydrogenase subunit PreA (411 aa).

Substrate contacts are provided by residues N76 and 134-136 (NFS). C137 functions as the Nucleophile in the catalytic mechanism. 201–202 (NT) contacts substrate. 4Fe-4S ferredoxin-type domains are found at residues 335–367 (VYPR…WSEK) and 369–398 (RTPH…LGEV). C344, C347, C350, C354, C378, C381, C384, and C388 together coordinate [4Fe-4S] cluster.

The protein belongs to the dihydropyrimidine dehydrogenase family. Heterotetramer of 2 PreA and 2 PreT subunits. Requires [4Fe-4S] cluster as cofactor.

The enzyme catalyses 5,6-dihydrouracil + NAD(+) = uracil + NADH + H(+). It carries out the reaction 5,6-dihydrothymine + NAD(+) = thymine + NADH + H(+). In terms of biological role, involved in pyrimidine base degradation. Catalyzes physiologically the reduction of uracil to 5,6-dihydrouracil (DHU) by using NADH as a specific cosubstrate. It also catalyzes the reverse reaction and the reduction of thymine to 5,6-dihydrothymine (DHT). The sequence is that of NAD-dependent dihydropyrimidine dehydrogenase subunit PreA (preA) from Escherichia coli O157:H7.